The chain runs to 62 residues: Large ribosomal subunit protein uL29 (62 aa).

It belongs to the universal ribosomal protein uL29 family.

The sequence is that of Large ribosomal subunit protein uL29 from Desulfatibacillum aliphaticivorans.